The following is a 110-amino-acid chain: Thiosulfate sulfurtransferase GlpE (110 aa).

The region spanning 17–105 (RENGAQVVDI…WRSVYPADTS (89 aa)) is the Rhodanese domain. Cysteine 65 serves as the catalytic Cysteine persulfide intermediate.

Belongs to the GlpE family.

Its subcellular location is the cytoplasm. It carries out the reaction thiosulfate + hydrogen cyanide = thiocyanate + sulfite + 2 H(+). The catalysed reaction is thiosulfate + [thioredoxin]-dithiol = [thioredoxin]-disulfide + hydrogen sulfide + sulfite + 2 H(+). Functionally, transferase that catalyzes the transfer of sulfur from thiosulfate to thiophilic acceptors such as cyanide or dithiols. May function in a CysM-independent thiosulfate assimilation pathway by catalyzing the conversion of thiosulfate to sulfite, which can then be used for L-cysteine biosynthesis. This chain is Thiosulfate sulfurtransferase GlpE, found in Pseudomonas aeruginosa (strain ATCC 15692 / DSM 22644 / CIP 104116 / JCM 14847 / LMG 12228 / 1C / PRS 101 / PAO1).